A 146-amino-acid polypeptide reads, in one-letter code: Aspartate carbamoyltransferase regulatory chain (146 aa).

Residues cysteine 102, cysteine 107, cysteine 131, and cysteine 134 each coordinate Zn(2+).

The protein belongs to the PyrI family. As to quaternary structure, contains catalytic and regulatory chains. The cofactor is Zn(2+).

In terms of biological role, involved in allosteric regulation of aspartate carbamoyltransferase. This is Aspartate carbamoyltransferase regulatory chain from Clostridium botulinum (strain Okra / Type B1).